Consider the following 210-residue polypeptide: 7-cyano-7-deazaguanine synthase 2 (210 aa).

10-20 (HSGGMDSTTCL) serves as a coordination point for ATP. Zn(2+) contacts are provided by C180, C193, C196, and C199.

It belongs to the QueC family. Requires Zn(2+) as cofactor.

The catalysed reaction is 7-carboxy-7-deazaguanine + NH4(+) + ATP = 7-cyano-7-deazaguanine + ADP + phosphate + H2O + H(+). It participates in purine metabolism; 7-cyano-7-deazaguanine biosynthesis. In terms of biological role, catalyzes the ATP-dependent conversion of 7-carboxy-7-deazaguanine (CDG) to 7-cyano-7-deazaguanine (preQ(0)). This chain is 7-cyano-7-deazaguanine synthase 2, found in Rhodopseudomonas palustris (strain HaA2).